The sequence spans 143 residues: Nucleoside diphosphate kinase (143 aa).

ATP is bound by residues Lys-11, Phe-59, Arg-87, Thr-93, Arg-104, and Asn-114. The Pros-phosphohistidine intermediate role is filled by His-117.

This sequence belongs to the NDK family. As to quaternary structure, homotetramer. Mg(2+) is required as a cofactor.

The protein resides in the cytoplasm. It catalyses the reaction a 2'-deoxyribonucleoside 5'-diphosphate + ATP = a 2'-deoxyribonucleoside 5'-triphosphate + ADP. The catalysed reaction is a ribonucleoside 5'-diphosphate + ATP = a ribonucleoside 5'-triphosphate + ADP. Functionally, major role in the synthesis of nucleoside triphosphates other than ATP. The ATP gamma phosphate is transferred to the NDP beta phosphate via a ping-pong mechanism, using a phosphorylated active-site intermediate. The protein is Nucleoside diphosphate kinase of Alteromonas mediterranea (strain DSM 17117 / CIP 110805 / LMG 28347 / Deep ecotype).